The following is an 837-amino-acid chain: V-type proton ATPase 116 kDa subunit a 1 (837 aa).

The Cytoplasmic segment spans residues M1 to E388. The chain crosses the membrane as a helical span at residues I389–F407. The Vacuolar segment spans residues G408–D409. Residues F410–R426 traverse the membrane as a helical segment. Residues E427–T441 lie on the Cytoplasmic side of the membrane. Residues M442 to A471 form a helical membrane-spanning segment. Over L472–S534 the chain is Vacuolar. Residues F535–L554 form a helical membrane-spanning segment. The Cytoplasmic portion of the chain corresponds to S555–F572. The chain crosses the membrane as a helical span at residues I573–K593. Residues W594–F638 lie on the Vacuolar side of the membrane. The helical transmembrane segment at L639 to L658 threads the bilayer. Residues R659–T724 are Cytoplasmic-facing. Residues I725–A749 traverse the membrane as a helical segment. Residues Q750–G770 are Vacuolar-facing. Residues G771–E809 form a helical membrane-spanning segment. Residues F810–E837 are Cytoplasmic-facing.

Belongs to the V-ATPase 116 kDa subunit family. V-ATPase is a heteromultimeric enzyme made up of two complexes: the ATP-hydrolytic V1 complex and the proton translocation V0 complex. The V1 complex consists of three catalytic AB heterodimers that form a heterohexamer, three peripheral stalks each consisting of EG heterodimers, one central rotor including subunits D and F, and the regulatory subunits C and H. The proton translocation complex V0 consists of the proton transport subunit a, a ring of proteolipid subunits c9c'', rotary subunit d, subunits e and f, and two accessory subunits.

Its subcellular location is the cytoplasmic vesicle. It localises to the clathrin-coated vesicle membrane. It is found in the secretory vesicle. The protein localises to the synaptic vesicle membrane. The protein resides in the melanosome. Subunit of the V0 complex of vacuolar(H+)-ATPase (V-ATPase), a multisubunit enzyme composed of a peripheral complex (V1) that hydrolyzes ATP and a membrane integral complex (V0) that translocates protons. V-ATPase is responsible for acidifying and maintaining the pH of intracellular compartments and in some cell types, is targeted to the plasma membrane, where it is responsible for acidifying the extracellular environment. Required for assembly and activity of the vacuolar ATPase. In Xenopus tropicalis (Western clawed frog), this protein is V-type proton ATPase 116 kDa subunit a 1 (atp6v0a1).